The primary structure comprises 81 residues: Small ribosomal subunit protein uS17 (81 aa).

This sequence belongs to the universal ribosomal protein uS17 family. As to quaternary structure, part of the 30S ribosomal subunit.

Its function is as follows. One of the primary rRNA binding proteins, it binds specifically to the 5'-end of 16S ribosomal RNA. The sequence is that of Small ribosomal subunit protein uS17 from Hyphomonas neptunium (strain ATCC 15444).